Consider the following 180-residue polypeptide: MIISETNRREISKYLFKEGVLFAKKDFNLPQHPLIESVPNLQVIKLMQSFKSKEYVRETFAWMHYYWFLTNEGIDFLRTYLNLPSEIVPATLKKQQKPLGRPFGGGGDRPRGPPRGDGERRFGDRDGYRGGPKSGGEYGDKAGAPADYQPGFRGGAGGARQGFGRGAGGFGGGAAGSDLP.

The segment at Leu92–Pro180 is disordered. A compositionally biased stretch (basic and acidic residues) spans Asp108 to Tyr128. Gly residues predominate over residues Phe152 to Pro180.

It belongs to the eukaryotic ribosomal protein eS10 family.

The protein localises to the cytoplasm. This chain is Small ribosomal subunit protein eS10y (RPS10B), found in Arabidopsis thaliana (Mouse-ear cress).